The chain runs to 255 residues: MNILIANDDGVFAPGIQALADALKPLGRVVVVAPESERSGFSSALTLDRPLRPIQIAEDVWAVNGTPADCVYLSMNGLFDFEFDLVVSGINSGANLGDDVLYSGTVGAAFEGRLMKQPAIAVSLAGPDVRSYDHKDDYAQAAKWVHDFIAKGLPALPPRHIFNINIPDVPQLKGTQITYQGRRAQSKPITSHVDPRGRQVYWIGLAGEAVTDPQRIASQIQSDFFAVANGFVSVTPIQMDATNYAVLEDLQASLG.

4 residues coordinate a divalent metal cation: D8, D9, S39, and N91.

The protein belongs to the SurE nucleotidase family. A divalent metal cation serves as cofactor.

The protein resides in the cytoplasm. It carries out the reaction a ribonucleoside 5'-phosphate + H2O = a ribonucleoside + phosphate. Functionally, nucleotidase that shows phosphatase activity on nucleoside 5'-monophosphates. The chain is 5'-nucleotidase SurE from Acinetobacter baumannii (strain AB0057).